Here is an 860-residue protein sequence, read N- to C-terminus: Protein argonaute-3 (860 aa).

Positions 230–349 (PVIQFMCEVL…LPLEVCNIVA (120 aa)) constitute a PAZ domain. A Piwi domain is found at 518–819 (LIIVILPGKT…VAFRARYHLV (302 aa)). Positions 530–567 (YAEVKRVGDTLLGMATQCVQVKNVVKTSPQTLSNLCLK) are interaction with guide RNA. Residues Asp598, Glu638, and Asp670 each contribute to the a divalent metal cation site. The tract at residues 758–805 (QGTSRPSHYYVLWDDNCFTADEFQLLTYQLCHTYVRCTRSVSIPAPAY) is interaction with guide RNA. His808 provides a ligand contact to a divalent metal cation.

It belongs to the argonaute family. Ago subfamily.

The protein localises to the cytoplasm. It is found in the P-body. It carries out the reaction Endonucleolytic cleavage to 5'-phosphomonoester.. Its function is as follows. Required for RNA-mediated gene silencing (RNAi). Binds to short RNAs such as microRNAs (miRNAs) and represses the translation of mRNAs which are complementary to them. Possesses RNA slicer activity but only on select RNAs bearing 5'- and 3'-flanking sequences to the region of guide-target complementarity. The polypeptide is Protein argonaute-3 (ago3) (Danio rerio (Zebrafish)).